The chain runs to 312 residues: Small ribosomal subunit biogenesis GTPase RsgA (312 aa).

The CP-type G domain maps to 86–245 (QSFLKRPAVA…LADTPGFNRP (160 aa)). GTP is bound by residues 135–138 (TKID) and 187–195 (GPSGVGKTS). The Zn(2+) site is built by C270, C275, H277, and C283.

This sequence belongs to the TRAFAC class YlqF/YawG GTPase family. RsgA subfamily. Monomer. Associates with 30S ribosomal subunit, binds 16S rRNA. Zn(2+) serves as cofactor.

It is found in the cytoplasm. In terms of biological role, one of several proteins that assist in the late maturation steps of the functional core of the 30S ribosomal subunit. Helps release RbfA from mature subunits. May play a role in the assembly of ribosomal proteins into the subunit. Circularly permuted GTPase that catalyzes slow GTP hydrolysis, GTPase activity is stimulated by the 30S ribosomal subunit. The polypeptide is Small ribosomal subunit biogenesis GTPase RsgA (Prochlorococcus marinus (strain NATL1A)).